The following is a 207-amino-acid chain: N-(5'-phosphoribosyl)anthranilate isomerase (207 aa).

This sequence belongs to the TrpF family.

The enzyme catalyses N-(5-phospho-beta-D-ribosyl)anthranilate = 1-(2-carboxyphenylamino)-1-deoxy-D-ribulose 5-phosphate. It functions in the pathway amino-acid biosynthesis; L-tryptophan biosynthesis; L-tryptophan from chorismate: step 3/5. The sequence is that of N-(5'-phosphoribosyl)anthranilate isomerase from Geotalea daltonii (strain DSM 22248 / JCM 15807 / FRC-32) (Geobacter daltonii).